Consider the following 218-residue polypeptide: Small ribosomal subunit protein uS3c (218 aa).

Positions 47–118 constitute a KH type-2 domain; it reads VQKNMRTSSG…KLNIAVTRIA (72 aa).

The protein belongs to the universal ribosomal protein uS3 family. As to quaternary structure, part of the 30S ribosomal subunit.

It localises to the plastid. It is found in the chloroplast. The protein is Small ribosomal subunit protein uS3c (rps3) of Solanum lycopersicum (Tomato).